Consider the following 123-residue polypeptide: Large ribosomal subunit protein eL8 (123 aa).

It belongs to the eukaryotic ribosomal protein eL8 family. As to quaternary structure, part of the 50S ribosomal subunit. Probably part of the RNase P complex.

It is found in the cytoplasm. Functionally, multifunctional RNA-binding protein that recognizes the K-turn motif in ribosomal RNA, the RNA component of RNase P, box H/ACA, box C/D and box C'/D' sRNAs. This is Large ribosomal subunit protein eL8 from Methanobrevibacter smithii (strain ATCC 35061 / DSM 861 / OCM 144 / PS).